The following is a 428-amino-acid chain: Histidine--tRNA ligase (428 aa).

This sequence belongs to the class-II aminoacyl-tRNA synthetase family. In terms of assembly, homodimer.

The protein resides in the cytoplasm. It catalyses the reaction tRNA(His) + L-histidine + ATP = L-histidyl-tRNA(His) + AMP + diphosphate + H(+). The polypeptide is Histidine--tRNA ligase (Lactobacillus delbrueckii subsp. bulgaricus (strain ATCC 11842 / DSM 20081 / BCRC 10696 / JCM 1002 / NBRC 13953 / NCIMB 11778 / NCTC 12712 / WDCM 00102 / Lb 14)).